The chain runs to 700 residues: Elongation factor G (700 aa).

Residues 8-290 (ERYRNIGISA…AVIDYLPAPT (283 aa)) form the tr-type G domain. GTP-binding positions include 17-24 (AHIDAGKT), 88-92 (DTPGH), and 142-145 (NKMD).

It belongs to the TRAFAC class translation factor GTPase superfamily. Classic translation factor GTPase family. EF-G/EF-2 subfamily.

Its subcellular location is the cytoplasm. Its function is as follows. Catalyzes the GTP-dependent ribosomal translocation step during translation elongation. During this step, the ribosome changes from the pre-translocational (PRE) to the post-translocational (POST) state as the newly formed A-site-bound peptidyl-tRNA and P-site-bound deacylated tRNA move to the P and E sites, respectively. Catalyzes the coordinated movement of the two tRNA molecules, the mRNA and conformational changes in the ribosome. The chain is Elongation factor G from Glaesserella parasuis serovar 5 (strain SH0165) (Haemophilus parasuis).